The following is a 405-amino-acid chain: Argininosuccinate synthase (405 aa).

ATP contacts are provided by residues 11–19 (AYSGGLDTS) and A38. Y91 and S96 together coordinate L-citrulline. ATP is bound at residue G121. Residues T123, N127, and D128 each coordinate L-aspartate. N127 provides a ligand contact to L-citrulline. R131, S182, S191, E267, and Y279 together coordinate L-citrulline.

This sequence belongs to the argininosuccinate synthase family. Type 1 subfamily. As to quaternary structure, homotetramer.

Its subcellular location is the cytoplasm. It carries out the reaction L-citrulline + L-aspartate + ATP = 2-(N(omega)-L-arginino)succinate + AMP + diphosphate + H(+). The protein operates within amino-acid biosynthesis; L-arginine biosynthesis; L-arginine from L-ornithine and carbamoyl phosphate: step 2/3. The chain is Argininosuccinate synthase from Sphingopyxis alaskensis (strain DSM 13593 / LMG 18877 / RB2256) (Sphingomonas alaskensis).